The following is a 463-amino-acid chain: L-seryl-tRNA(Sec) selenium transferase (463 aa).

An N6-(pyridoxal phosphate)lysine modification is found at Lys-295.

It belongs to the SelA family. In terms of assembly, homodecamer; pentamer of dimers. Binds only one seryl-tRNA(Sec) per dimer. Pyridoxal 5'-phosphate is required as a cofactor.

The protein resides in the cytoplasm. It carries out the reaction L-seryl-tRNA(Sec) + selenophosphate + H(+) = L-selenocysteinyl-tRNA(Sec) + phosphate. Its pathway is aminoacyl-tRNA biosynthesis; selenocysteinyl-tRNA(Sec) biosynthesis; selenocysteinyl-tRNA(Sec) from L-seryl-tRNA(Sec) (bacterial route): step 1/1. In terms of biological role, converts seryl-tRNA(Sec) to selenocysteinyl-tRNA(Sec) required for selenoprotein biosynthesis. The chain is L-seryl-tRNA(Sec) selenium transferase from Salmonella typhimurium (strain LT2 / SGSC1412 / ATCC 700720).